Consider the following 87-residue polypeptide: Large ribosomal subunit protein bL27 (87 aa).

It belongs to the bacterial ribosomal protein bL27 family.

This chain is Large ribosomal subunit protein bL27, found in Paenarthrobacter aurescens (strain TC1).